We begin with the raw amino-acid sequence, 167 residues long: Protein DLS1 (167 aa).

Position 17 is a phosphoserine (serine 17).

In terms of assembly, component of the ISW2 complex, which at least consists of ISW2, ITC1, DLS1 and DPB4.

The protein resides in the nucleus. Its function is as follows. Functions as a component of the ISW2 complex, which acts in remodeling the chromatin by catalyzing an ATP-dependent alteration in the structure of nucleosomal DNA. The ISW2 complex is involved in coordinating transcriptional repression and in inheritance of telomeric silencing. It is involved in repression of MAT a-specific genes, INO1, and early meiotic genes during mitotic growth dependent upon transcription factor UME6 and in a parallel pathway to the RPD3-SIN3 histone deacetylase complex. DLS1 is partially required for the ISW2 complex chromatin remodeling activity and is not required for its interaction with chromatin. In Saccharomyces cerevisiae (strain ATCC 204508 / S288c) (Baker's yeast), this protein is Protein DLS1 (DLS1).